The sequence spans 137 residues: Nucleoside diphosphate kinase (137 aa).

The ATP site is built by Lys-11, Phe-59, Arg-87, Thr-93, Arg-104, and Asn-114. Catalysis depends on His-117, which acts as the Pros-phosphohistidine intermediate.

The protein belongs to the NDK family. As to quaternary structure, homotetramer. Mg(2+) is required as a cofactor.

The protein localises to the cytoplasm. The enzyme catalyses a 2'-deoxyribonucleoside 5'-diphosphate + ATP = a 2'-deoxyribonucleoside 5'-triphosphate + ADP. The catalysed reaction is a ribonucleoside 5'-diphosphate + ATP = a ribonucleoside 5'-triphosphate + ADP. Its function is as follows. Major role in the synthesis of nucleoside triphosphates other than ATP. The ATP gamma phosphate is transferred to the NDP beta phosphate via a ping-pong mechanism, using a phosphorylated active-site intermediate. This is Nucleoside diphosphate kinase from Parafrankia sp. (strain EAN1pec).